A 735-amino-acid polypeptide reads, in one-letter code: Peroxisomal multifunctional enzyme type 2 (735 aa).

The segment at 1-305 (MASPLRFDGR…VEVLHKVDSE (305 aa)) is (3R)-hydroxyacyl-CoA dehydrogenase. Residues 13 to 37 (LVTG…ALVI), leucine 21, and aspartate 40 each bind NAD(+). Position 46 is an N6-acetyllysine; alternate (lysine 46). Position 46 is an N6-succinyllysine; alternate (lysine 46). Serine 52 carries the post-translational modification Phosphoserine. N6-succinyllysine is present on residues lysine 57 and lysine 68. 75–76 (SV) is an NAD(+) binding site. At lysine 84 the chain carries N6-succinyllysine. Asparagine 99 contributes to the NAD(+) binding site. Position 151 (serine 151) interacts with substrate. Tyrosine 164 (proton acceptor) is an active-site residue. Residues 164–168 (YSAAK) and 196–199 (AGSR) each bind NAD(+). Threonine 265 carries the post-translational modification Phosphothreonine. Lysine 275 bears the N6-succinyllysine mark. A phosphoserine mark is found at serine 304 and serine 308. An enoyl-CoA hydratase 2 region spans residues 321 to 621 (SGFVGAVGHK…TQTPSEGGEL (301 aa)). Lysine 355 carries the post-translational modification N6-succinyllysine. 405-406 (HG) is a binding site for (3R)-3-hydroxydecanoyl-CoA. Lysine 423 bears the N6-succinyllysine mark. Residues lysine 434, 509 to 514 (DWNPLH), glycine 532, and phenylalanine 562 each bind (3R)-3-hydroxydecanoyl-CoA. Positions 483 to 599 (VPNRPPDAVL…HETGDVVISN (117 aa)) constitute a MaoC-like domain. Lysine 564 is modified (N6-acetyllysine). 2 positions are modified to N6-succinyllysine: lysine 578 and lysine 662. The SCP2 domain maps to 623–735 (SALVFGEIGR…QMILKDYAKL (113 aa)). An N6-acetyllysine modification is found at lysine 668. Glutamine 705 is a binding site for substrate. Lysine 706 carries the N6-acetyllysine modification. Glutamine 723 provides a ligand contact to substrate. Residue lysine 724 is modified to N6-succinyllysine. The short motif at 733-735 (AKL) is the Microbody targeting signal element.

Belongs to the short-chain dehydrogenases/reductases (SDR) family. In terms of assembly, homodimer. In terms of tissue distribution, present in many tissues with highest concentrations in liver and kidney.

The protein localises to the peroxisome. It catalyses the reaction a (3R)-3-hydroxyacyl-CoA + NAD(+) = a 3-oxoacyl-CoA + NADH + H(+). The catalysed reaction is (24R,25R)-3alpha,7alpha,12alpha,24-tetrahydroxy-5beta-cholestan-26-oyl-CoA = (24E)-3alpha,7alpha,12alpha-trihydroxy-5beta-cholest-24-en-26-oyl-CoA + H2O. It carries out the reaction a (3R)-3-hydroxyacyl-CoA = a (2E)-enoyl-CoA + H2O. The enzyme catalyses (2E)-octenoyl-CoA + H2O = (3R)-hydroxyoctanoyl-CoA. It catalyses the reaction (3R)-hydroxyoctanoyl-CoA + NAD(+) = 3-oxooctanoyl-CoA + NADH + H(+). The catalysed reaction is (3R)-hydroxyhexadecanoyl-CoA + NAD(+) = 3-oxohexadecanoyl-CoA + NADH + H(+). It carries out the reaction (2E)-hexadecenedioyl-CoA + H2O = (3R)-hydroxyhexadecanedioyl-CoA. The enzyme catalyses (3R)-hydroxyhexadecanedioyl-CoA + NAD(+) = 3-oxohexadecanedioyl-CoA + NADH + H(+). It catalyses the reaction (3R)-hydroxyhexadecanoyl-CoA = (2E)-hexadecenoyl-CoA + H2O. The catalysed reaction is (3R)-3-hydroxydecanoyl-CoA = (2E)-decenoyl-CoA + H2O. It carries out the reaction (3R)-3-hydroxydecanoyl-CoA + NAD(+) = 3-oxodecanoyl-CoA + NADH + H(+). The enzyme catalyses (24R,25R)-3alpha,7alpha,12alpha,24-tetrahydroxy-5beta-cholestan-26-oyl-CoA + NAD(+) = 3alpha,7alpha,12alpha-trihydroxy-24-oxo-5beta-cholestan-26-oyl-CoA + NADH + H(+). It functions in the pathway lipid metabolism; fatty acid beta-oxidation. Bifunctional enzyme acting on the peroxisomal fatty acid beta-oxidation pathway. Catalyzes two of the four reactions in fatty acid degradation: hydration of 2-enoyl-CoA (trans-2-enoyl-CoA) to produce (3R)-3-hydroxyacyl-CoA, and dehydrogenation of (3R)-3-hydroxyacyl-CoA to produce 3-ketoacyl-CoA (3-oxoacyl-CoA), which is further metabolized by SCPx. Can use straight-chain and branched-chain fatty acids, as well as bile acid intermediates as substrates. The protein is Peroxisomal multifunctional enzyme type 2 of Mus musculus (Mouse).